The sequence spans 231 residues: Probable septum site-determining protein MinC (231 aa).

The segment at 100-125 is disordered; the sequence is EGKEKSPRPAPAPQAPAQNTTPVTKT.

The protein belongs to the MinC family. Interacts with MinD and FtsZ.

Its function is as follows. Cell division inhibitor that blocks the formation of polar Z ring septums. Rapidly oscillates between the poles of the cell to destabilize FtsZ filaments that have formed before they mature into polar Z rings. Prevents FtsZ polymerization. The protein is Probable septum site-determining protein MinC of Escherichia coli O81 (strain ED1a).